The sequence spans 272 residues: Orotidine 5'-phosphate decarboxylase (272 aa).

Residue Lys95 is the Proton donor of the active site.

The protein belongs to the OMP decarboxylase family. Type 2 subfamily.

The catalysed reaction is orotidine 5'-phosphate + H(+) = UMP + CO2. It participates in pyrimidine metabolism; UMP biosynthesis via de novo pathway; UMP from orotate: step 2/2. In Bordetella petrii (strain ATCC BAA-461 / DSM 12804 / CCUG 43448), this protein is Orotidine 5'-phosphate decarboxylase.